A 1004-amino-acid chain; its full sequence is MAKGKQKKGKDLNELKKELDIDFHKIPIEECYQRLGSNPETGLTNAQARSNIERDGPNCLTPPKTTPEWIKFCKNLFGGFALLLWTGAILCFLAYGIEASSGNEDMLKDNLYLGIVLATVVIVTGIFSYYQENKSSRIMDSFKNLVPQYALALREGQRVTLKAEELTMGDIVEVKFGDRVPADLRVLEARSFKVDNSSLTGESEPQARSPEFTNDNPLETKNLAFFSTNAVEGTMRGIVIGIGDNTVMGRIAGLASGLDTGETPIAKEIAHFIHIITGVAVFLGVTFFIIAFVLGYHWLDAVVFLIGIIVANVPEGLLATVTVCLTLTAKRMASKNCLVKNLEAVETLGSTSTICSDKTGTLTQNRMTVAHMWFDGTITEADTTEDQSGAQFDKSSAGWKALVKIAALCSRAEFKPNQSTTPILKREVTGDASEAAILKCVELTTGETEAIRKRNKKICEIPFNSANKFQVSIHENEDKSDGRYLLVMKGAPERILERCSTIFMNGKEIDMTEELKEAFNNAYMELGGLGERVLGFCDYLLPLDKYPHGFAFNADDANFPLTGLRFAGLMSMIDPPRAAVPDAVAKCRSAGIKVIMVTGDHPITAKAIAKSVGIISEGNETVEDIAARLNIPVSEVNPRDAKAAVVHGGELRDITPDALDEILRHHPEIVFARTSPQQKLIIVEGCQRQGAIVAVTGDGVNDSPALKKADIGVAMGIAGSDVSKQAADMILLDDNFASIVTGVEEGRLIFDNLKKSIVYTLTSNIPEISPFLLFILFDIPLPLGTVTILCIDLGTDMVPAISLAYEEAESDIMKRRPRNPVTDKLVNERLISLAYGQIGMIQASAGFFVYFVIMAECGFLPWDLFGLRKHWDSRAVNDLTDSYGQEWTYDARKQLESSCHTAYFVSIVIVQWADLIISKTRRNSVFQQGMRNNILNFALVFETCLAAFLSYTPGMDKGLRMYPLKINWWFPALPFSFLIFVYDEARKFILRRNPGGWVEQETYY.

The next 2 helical transmembrane spans lie at 76–96 (LFGG…LAYG) and 110–126 (NLYL…VTGI). Positions 197–216 (SSLTGESEPQARSPEFTNDN) are disordered. A run of 2 helical transmembrane segments spans residues 272–294 (FIHI…AFVL) and 301–329 (AVVF…TLTA). Residue Asp-357 is the 4-aspartylphosphate intermediate of the active site. Lys-489 lines the ATP pocket. Asp-698 and Asp-702 together coordinate Mg(2+). Helical transmembrane passes span 768 to 791 (ISPF…ILCI), 828 to 855 (ERLI…VIMA), 897 to 918 (SSCH…LIIS), and 934 to 959 (ILNF…DKGL).

It belongs to the cation transport ATPase (P-type) (TC 3.A.3) family. Type IIC subfamily. In terms of assembly, the sodium/potassium-transporting ATPase is composed of a catalytic alpha subunit, an auxiliary non-catalytic beta subunit and an additional regulatory subunit.

The protein localises to the cell membrane. It catalyses the reaction K(+)(out) + Na(+)(in) + ATP + H2O = K(+)(in) + Na(+)(out) + ADP + phosphate + H(+). This is the catalytic component of the active enzyme, which catalyzes the hydrolysis of ATP coupled with the exchange of sodium and potassium ions across the plasma membrane. This action creates the electrochemical gradient of sodium and potassium ions, providing the energy for active transport of various nutrients. In Artemia franciscana (Brine shrimp), this protein is Sodium/potassium-transporting ATPase subunit alpha-B.